We begin with the raw amino-acid sequence, 562 residues long: Nicotinate phosphoribosyltransferase (562 aa).

Nicotinate is bound by residues Tyr36, Phe183, and Thr225. His228 is modified (phosphohistidine). Thr397 provides a ligand contact to 5-phospho-alpha-D-ribose 1-diphosphate.

Belongs to the NAPRTase family. Mg(2+) serves as cofactor. Mn(2+) is required as a cofactor. Post-translationally, transiently phosphorylated on a His residue during the reaction cycle. Phosphorylation strongly increases the affinity for substrates and increases the rate of nicotinate D-ribonucleotide production. Dephosphorylation regenerates the low-affinity form of the enzyme, leading to product release.

It catalyses the reaction nicotinate + 5-phospho-alpha-D-ribose 1-diphosphate + ATP + H2O = nicotinate beta-D-ribonucleotide + ADP + phosphate + diphosphate. It functions in the pathway cofactor biosynthesis; NAD(+) biosynthesis; nicotinate D-ribonucleotide from nicotinate: step 1/1. Catalyzes the first step in the biosynthesis of NAD from nicotinic acid, the ATP-dependent synthesis of beta-nicotinate D-ribonucleotide from nicotinate and 5-phospho-D-ribose 1-phosphate. Helps prevent cellular oxidative stress via its role in NAD biosynthesis. The polypeptide is Nicotinate phosphoribosyltransferase (Caenorhabditis elegans).